Reading from the N-terminus, the 805-residue chain is Phenylalanine--tRNA ligase beta subunit (805 aa).

One can recognise a tRNA-binding domain in the interval 39–148; the sequence is APPFTGVVVA…AALRPGTDIR (110 aa). The B5 domain occupies 399-474; that stretch reads PVREPVRMRL…RVYGFERIPD (76 aa). 4 residues coordinate Mg(2+): D452, D458, E461, and E462. The FDX-ACB domain maps to 703-804; that stretch reads SRQPAVVRDL…LVAAHNARQR (102 aa).

This sequence belongs to the phenylalanyl-tRNA synthetase beta subunit family. Type 1 subfamily. Tetramer of two alpha and two beta subunits. It depends on Mg(2+) as a cofactor.

It is found in the cytoplasm. The catalysed reaction is tRNA(Phe) + L-phenylalanine + ATP = L-phenylalanyl-tRNA(Phe) + AMP + diphosphate + H(+). The polypeptide is Phenylalanine--tRNA ligase beta subunit (Bordetella parapertussis (strain 12822 / ATCC BAA-587 / NCTC 13253)).